Consider the following 347-residue polypeptide: MSARLTLLRPDDWHIHLRDGAALPHTVADAARQFARAIIMPNLVPPVRNADEAEAYRQRILAARPAGSRFEPLMVLYLTDSTTPDDIRRAKASGFVHAAKLYPAGATTNSASGVTAIDNIFGVLETMAEVGLPLLVHGEVTRSEIDIFDREKYFIDEQLSRVTARFPTLKVVFEHITTRDAVQFVQAAGANVGATITAHHLLYNRNHMLVGGIRPHLFCLPVLKRNLHQEALLDAATSGSPKFFLGTDSAPHAQHAKEAACGCAGCYTAFAAIELYAEAFEQRQALDKLEPFASHFGPDFYGLPRNTDEITLVRTEWDVPASLPFGEQVVVPLRAGERLHWRLESNA.

2 residues coordinate Zn(2+): His-14 and His-16. Residues 16 to 18 (HLR) and Asn-42 each bind substrate. 3 residues coordinate Zn(2+): Lys-100, His-137, and His-175. At Lys-100 the chain carries N6-carboxylysine. A substrate-binding site is contributed by His-137. Residue Leu-220 participates in substrate binding. Residue Asp-248 participates in Zn(2+) binding. The active site involves Asp-248. Residues His-252 and Ala-264 each contribute to the substrate site.

It belongs to the metallo-dependent hydrolases superfamily. DHOase family. Class II DHOase subfamily. Homodimer. It depends on Zn(2+) as a cofactor.

The enzyme catalyses (S)-dihydroorotate + H2O = N-carbamoyl-L-aspartate + H(+). The protein operates within pyrimidine metabolism; UMP biosynthesis via de novo pathway; (S)-dihydroorotate from bicarbonate: step 3/3. In terms of biological role, catalyzes the reversible cyclization of carbamoyl aspartate to dihydroorotate. The protein is Dihydroorotase of Stutzerimonas stutzeri (strain A1501) (Pseudomonas stutzeri).